Consider the following 132-residue polypeptide: MMRGVTMVLLLPMLVWAGSECKARCCLTNISITVESDECGSCITVNTTACTGLCRTQERAYRSPVAPYFQNTCNFRDWTYETIQLPGCPLGVDSSFTYPVALSCECSQCNTEITDCGAFSMQPSSCHTHAYY.

The signal sequence occupies residues 1 to 17 (MMRGVTMVLLLPMLVWA). 5 disulfide bridges follow: C25–C73, C39–C88, C50–C104, C54–C106, and C109–C116. 2 N-linked (GlcNAc...) asparagine glycosylation sites follow: N29 and N46.

It belongs to the glycoprotein hormones subunit beta family. In terms of assembly, heterodimer of an alpha and a beta chain.

The protein localises to the secreted. Its function is as follows. Involved in gametogenesis and steroidogenesis. This chain is Gonadotropin subunit beta-1 (cgba), found in Ictalurus punctatus (Channel catfish).